A 178-amino-acid chain; its full sequence is uncharacterized protein (178 aa).

A run of 4 helical transmembrane segments spans residues 3–23, 56–76, 101–121, and 150–170; these read IPII…FISI, IFLM…NLIF, LILP…VAGF, and LSLI…YITP.

This sequence to M.jannaschii MJ0706 and Synechocystis PCC 6803 slr1478.

The protein localises to the cell membrane. This is an uncharacterized protein from Methanocaldococcus jannaschii (strain ATCC 43067 / DSM 2661 / JAL-1 / JCM 10045 / NBRC 100440) (Methanococcus jannaschii).